The sequence spans 135 residues: Membrane-anchored ubiquitin-fold protein 4 (135 aa).

Residues 1–20 form a disordered region; the sequence is MAEKEEGKVAAEGGAEAEAD. In terms of domain architecture, Ubiquitin-like spans 23-92; it reads VEVKFRLFDG…NDKNIAQCRA (70 aa). Cysteine 132 carries the post-translational modification Cysteine methyl ester. Residue cysteine 132 is the site of S-geranylgeranyl cysteine attachment. Residues 133–135 constitute a propeptide, removed in mature form; the sequence is TIL.

It is found in the cell membrane. Its function is as follows. May serve as docking site to facilitate the association of other proteins to the plasma membrane. The chain is Membrane-anchored ubiquitin-fold protein 4 (MUB4) from Oryza sativa subsp. japonica (Rice).